The following is a 474-amino-acid chain: 4-aminobutyrate aminotransferase (474 aa).

The segment covering 1 to 13 (MSSTATVTESTHF) has biased composition (polar residues). Residues 1-31 (MSSTATVTESTHFFPNEPQGPSIKTETIPGP) are disordered. Position 142–143 (142–143 (GS)) interacts with pyridoxal 5'-phosphate. R199 serves as a coordination point for substrate. K333 bears the N6-(pyridoxal phosphate)lysine mark. T357 provides a ligand contact to pyridoxal 5'-phosphate.

It belongs to the class-III pyridoxal-phosphate-dependent aminotransferase family. In terms of assembly, homodimer. It depends on pyridoxal 5'-phosphate as a cofactor.

It localises to the cytoplasm. The enzyme catalyses 4-aminobutanoate + 2-oxoglutarate = succinate semialdehyde + L-glutamate. In terms of biological role, required for the degradation of gamma-aminobutyric acid (GABA), which is important for utilization of GABA as nitrogen source. Deaminates GABA to succinate-semialdehyde, which in turn is converted to succinate by the succinate semialdehyde dehydrogenase. Cannot transaminate beta-alanine (BAL). The sequence is that of 4-aminobutyrate aminotransferase (uga1) from Schizosaccharomyces pombe (strain 972 / ATCC 24843) (Fission yeast).